The primary structure comprises 765 residues: Lysyl oxidase homolog 2 (765 aa).

The N-terminal stretch at 1–19 (MLVSHVFLLTLSLSVPSLG) is a signal peptide. SRCR domains are found at residues 49 to 150 (VRLA…VQCS), 179 to 293 (IRPI…VSCT), 317 to 416 (VRLR…VRCN), and 426 to 535 (VRLS…VSCV). Intrachain disulfides connect Cys-75–Cys-139, Cys-88–Cys-149, Cys-119–Cys-129, Cys-209–Cys-282, Cys-222–Cys-292, Cys-256–Cys-266, Cys-342–Cys-405, Cys-355–Cys-415, and Cys-386–Cys-396. N-linked (GlcNAc...) asparagine glycosylation is present at Asn-279. A glycan (N-linked (GlcNAc...) asparagine) is linked at Asn-446. Cystine bridges form between Cys-455/Cys-521, Cys-468/Cys-534, and Cys-502/Cys-512. The segment at 539-742 (PDLVLNAALV…WMYNCHIGGS (204 aa)) is lysyl-oxidase like. Residues Asp-540 and Leu-541 each coordinate Ca(2+). 4 cysteine pairs are disulfide-bonded: Cys-564–Cys-616, Cys-570–Cys-686, Cys-648–Cys-664, and Cys-654–Cys-676. The Cu cation site is built by His-617, His-619, and His-621. Asn-635 carries N-linked (GlcNAc...) asparagine glycosylation. A cross-link (lysine tyrosylquinone (Lys-Tyr)) is located at residues 644-680 (KASFCLEDSECEADIQKQYVCANFGEQGITVGCWDLY). Tyr-680 is modified (2',4',5'-topaquinone). Residues Glu-713, Asp-715, Asn-718, and Asn-719 each coordinate Ca(2+). Cys-723 and Cys-737 are oxidised to a cystine.

It belongs to the lysyl oxidase family. Cu cation is required as a cofactor. Lysine tyrosylquinone residue serves as cofactor. Post-translationally, the lysine tyrosylquinone cross-link (LTQ) is generated by condensation of the epsilon-amino group of a lysine with a topaquinone produced by oxidation of tyrosine.

The protein resides in the secreted. It localises to the extracellular space. Its subcellular location is the extracellular matrix. The protein localises to the basement membrane. It is found in the nucleus. The protein resides in the chromosome. It localises to the endoplasmic reticulum. The enzyme catalyses L-lysyl-[protein] + O2 + H2O = (S)-2-amino-6-oxohexanoyl-[protein] + H2O2 + NH4(+). Mediates the post-translational oxidative deamination of lysine residues on target proteins leading to the formation of deaminated lysine (allysine). Acts as a transcription corepressor and specifically mediates deamination of trimethylated 'Lys-4' of histone H3 (H3K4me3), a specific tag for epigenetic transcriptional activation. Shows no activity against histone H3 when it is trimethylated on 'Lys-9' (H3K9me3) or 'Lys-27' (H3K27me3) or when 'Lys-4' is monomethylated (H3K4me1) or dimethylated (H3K4me2). Also mediates deamination of methylated TAF10, a member of the transcription factor IID (TFIID) complex, which induces release of TAF10 from promoters, leading to inhibition of TFIID-dependent transcription. LOXL2-mediated deamination of TAF10 results in transcriptional repression of genes required for embryonic stem cell pluripotency. Involved in epithelial to mesenchymal transition (EMT) and participates in repression of E-cadherin, probably by mediating deamination of histone H3. When secreted into the extracellular matrix, promotes cross-linking of extracellular matrix proteins by mediating oxidative deamination of peptidyl lysine residues in precursors to fibrous collagen and elastin. Acts as a regulator of sprouting angiogenesis, probably via collagen IV scaffolding. Acts as a regulator of chondrocyte differentiation, probably by regulating expression of factors that control chondrocyte differentiation. The polypeptide is Lysyl oxidase homolog 2 (loxl2) (Xenopus laevis (African clawed frog)).